The primary structure comprises 436 residues: MSMLQTLWRSDPAVARIIDGEMRRQRDGLELIASENYASRAVMEAQGSALTNKYAEGYPGARYYGGCEWVDQVEDLARARVKELFGAEYANVQPHSGSQANMAVYFTFLRPGDKVLGMNLAHGGHLTHGSPVNFSGQLYTFVAYGIDPKTERIDYDQVAEIARRERPKMITVGASAYSRAIDFAIFRQIADEVGAFLFADIAHPAGLIAKGLLPSPIPYAHVVTSTTHKTLRGPRGGIIMMGKDFENPFGLKAAKSGRTLMMSELLDKMVIPGVQGGPLMHVIAAKAVGFGENLQPEFETYARQIIRNAQTLAGALMARGYHILSGGTDNHLMLIDLRNKGVSGKAAQEALDRAAITTNKNAVPNDDKSPLITSGIRLGTPALTTRGMKEPEMEQIAALIDDVITHINDDHTINRVREEVFALCARFPVPGLEPSA.

(6S)-5,6,7,8-tetrahydrofolate contacts are provided by residues L120 and 124 to 126 (GHL). Residue K229 is modified to N6-(pyridoxal phosphate)lysine.

It belongs to the SHMT family. As to quaternary structure, homodimer. Pyridoxal 5'-phosphate serves as cofactor.

It is found in the cytoplasm. The enzyme catalyses (6R)-5,10-methylene-5,6,7,8-tetrahydrofolate + glycine + H2O = (6S)-5,6,7,8-tetrahydrofolate + L-serine. It participates in one-carbon metabolism; tetrahydrofolate interconversion. The protein operates within amino-acid biosynthesis; glycine biosynthesis; glycine from L-serine: step 1/1. Catalyzes the reversible interconversion of serine and glycine with tetrahydrofolate (THF) serving as the one-carbon carrier. This reaction serves as the major source of one-carbon groups required for the biosynthesis of purines, thymidylate, methionine, and other important biomolecules. Also exhibits THF-independent aldolase activity toward beta-hydroxyamino acids, producing glycine and aldehydes, via a retro-aldol mechanism. The chain is Serine hydroxymethyltransferase from Roseiflexus castenholzii (strain DSM 13941 / HLO8).